The following is a 77-amino-acid chain: Acyl carrier protein (77 aa).

The region spanning 1 to 76 (MATFDDVKAV…DVVNYIDNLK (76 aa)) is the Carrier domain. Ser-36 is subject to O-(pantetheine 4'-phosphoryl)serine.

Belongs to the acyl carrier protein (ACP) family. In terms of processing, 4'-phosphopantetheine is transferred from CoA to a specific serine of apo-ACP by AcpS. This modification is essential for activity because fatty acids are bound in thioester linkage to the sulfhydryl of the prosthetic group.

It localises to the cytoplasm. It functions in the pathway lipid metabolism; fatty acid biosynthesis. Carrier of the growing fatty acid chain in fatty acid biosynthesis. This Campylobacter jejuni (strain RM1221) protein is Acyl carrier protein.